A 470-amino-acid chain; its full sequence is UDP-N-acetylmuramoylalanine--D-glutamate ligase (470 aa).

124-130 is a binding site for ATP; it reads GTNGKTT.

Belongs to the MurCDEF family.

The protein resides in the cytoplasm. It carries out the reaction UDP-N-acetyl-alpha-D-muramoyl-L-alanine + D-glutamate + ATP = UDP-N-acetyl-alpha-D-muramoyl-L-alanyl-D-glutamate + ADP + phosphate + H(+). Its pathway is cell wall biogenesis; peptidoglycan biosynthesis. Functionally, cell wall formation. Catalyzes the addition of glutamate to the nucleotide precursor UDP-N-acetylmuramoyl-L-alanine (UMA). This is UDP-N-acetylmuramoylalanine--D-glutamate ligase from Prochlorococcus marinus (strain SARG / CCMP1375 / SS120).